Reading from the N-terminus, the 102-residue chain is uncharacterized protein (102 aa).

A signal peptide spans 1 to 41 (MLFLDSYSLLIQFQRFKNWESPRRFSSSFPLLLFVFKPIFA).

This is an uncharacterized protein from Saccharomyces cerevisiae (strain ATCC 204508 / S288c) (Baker's yeast).